Consider the following 215-residue polypeptide: uncharacterized protein (215 aa).

S-adenosyl-L-methionine-binding residues include Gly-53, Glu-74, and Asp-97.

The protein belongs to the methyltransferase superfamily. YrrT family.

Could be a S-adenosyl-L-methionine-dependent methyltransferase. This is an uncharacterized protein from Geobacillus thermodenitrificans (strain NG80-2).